Here is a 474-residue protein sequence, read N- to C-terminus: tRNA-2-methylthio-N(6)-dimethylallyladenosine synthase (474 aa).

Residues 3-120 (KKLHIKTWGC…LPEMINHVNG (118 aa)) enclose the MTTase N-terminal domain. Residues Cys12, Cys49, Cys83, Cys157, Cys161, and Cys164 each coordinate [4Fe-4S] cluster. Residues 143-375 (RAEGPTAFVS…QERITQQAMQ (233 aa)) enclose the Radical SAM core domain. Residues 378–441 (RRMKGKVQRI…PNSLRGVLLR (64 aa)) form the TRAM domain.

This sequence belongs to the methylthiotransferase family. MiaB subfamily. In terms of assembly, monomer. [4Fe-4S] cluster serves as cofactor.

It is found in the cytoplasm. The enzyme catalyses N(6)-dimethylallyladenosine(37) in tRNA + (sulfur carrier)-SH + AH2 + 2 S-adenosyl-L-methionine = 2-methylsulfanyl-N(6)-dimethylallyladenosine(37) in tRNA + (sulfur carrier)-H + 5'-deoxyadenosine + L-methionine + A + S-adenosyl-L-homocysteine + 2 H(+). Catalyzes the methylthiolation of N6-(dimethylallyl)adenosine (i(6)A), leading to the formation of 2-methylthio-N6-(dimethylallyl)adenosine (ms(2)i(6)A) at position 37 in tRNAs that read codons beginning with uridine. The protein is tRNA-2-methylthio-N(6)-dimethylallyladenosine synthase of Sodalis glossinidius (strain morsitans).